The following is a 325-amino-acid chain: Glyoxylate/hydroxypyruvate reductase B (325 aa).

Active-site residues include arginine 237 and glutamate 266. Histidine 285 acts as the Proton donor in catalysis.

This sequence belongs to the D-isomer specific 2-hydroxyacid dehydrogenase family. GhrB subfamily. In terms of assembly, homodimer.

It localises to the cytoplasm. It catalyses the reaction glycolate + NADP(+) = glyoxylate + NADPH + H(+). It carries out the reaction (R)-glycerate + NAD(+) = 3-hydroxypyruvate + NADH + H(+). The catalysed reaction is (R)-glycerate + NADP(+) = 3-hydroxypyruvate + NADPH + H(+). Catalyzes the NADPH-dependent reduction of glyoxylate and hydroxypyruvate into glycolate and glycerate, respectively. The sequence is that of Glyoxylate/hydroxypyruvate reductase B from Serratia proteamaculans (strain 568).